The chain runs to 284 residues: Putative ABC transporter ATP-binding protein SCO5958 (284 aa).

One can recognise an ABC transporter domain in the interval Val-15–Leu-250. Position 48 to 55 (Gly-48 to Thr-55) interacts with ATP.

The protein belongs to the ABC transporter superfamily.

The protein localises to the cell membrane. Its function is as follows. Probably part of an ABC transporter complex. Responsible for energy coupling to the transport system. The polypeptide is Putative ABC transporter ATP-binding protein SCO5958 (Streptomyces coelicolor (strain ATCC BAA-471 / A3(2) / M145)).